The sequence spans 350 residues: Protein RecA (350 aa).

Glycine 67–threonine 74 is an ATP binding site.

This sequence belongs to the RecA family.

Its subcellular location is the cytoplasm. Can catalyze the hydrolysis of ATP in the presence of single-stranded DNA, the ATP-dependent uptake of single-stranded DNA by duplex DNA, and the ATP-dependent hybridization of homologous single-stranded DNAs. It interacts with LexA causing its activation and leading to its autocatalytic cleavage. The sequence is that of Protein RecA from Baumannia cicadellinicola subsp. Homalodisca coagulata.